Here is a 232-residue protein sequence, read N- to C-terminus: Ubiquinone biosynthesis O-methyltransferase (232 aa).

S-adenosyl-L-methionine is bound by residues R36, G55, D76, and M120.

This sequence belongs to the methyltransferase superfamily. UbiG/COQ3 family.

The enzyme catalyses a 3-demethylubiquinol + S-adenosyl-L-methionine = a ubiquinol + S-adenosyl-L-homocysteine + H(+). The catalysed reaction is a 3-(all-trans-polyprenyl)benzene-1,2-diol + S-adenosyl-L-methionine = a 2-methoxy-6-(all-trans-polyprenyl)phenol + S-adenosyl-L-homocysteine + H(+). The protein operates within cofactor biosynthesis; ubiquinone biosynthesis. Functionally, O-methyltransferase that catalyzes the 2 O-methylation steps in the ubiquinone biosynthetic pathway. The protein is Ubiquinone biosynthesis O-methyltransferase of Burkholderia lata (strain ATCC 17760 / DSM 23089 / LMG 22485 / NCIMB 9086 / R18194 / 383).